A 345-amino-acid chain; its full sequence is Tetraacyldisaccharide 4'-kinase (345 aa).

61–68 (TAGGTGKT) is an ATP binding site.

Belongs to the LpxK family.

The enzyme catalyses a lipid A disaccharide + ATP = a lipid IVA + ADP + H(+). The protein operates within glycolipid biosynthesis; lipid IV(A) biosynthesis; lipid IV(A) from (3R)-3-hydroxytetradecanoyl-[acyl-carrier-protein] and UDP-N-acetyl-alpha-D-glucosamine: step 6/6. Transfers the gamma-phosphate of ATP to the 4'-position of a tetraacyldisaccharide 1-phosphate intermediate (termed DS-1-P) to form tetraacyldisaccharide 1,4'-bis-phosphate (lipid IVA). This Xanthomonas euvesicatoria pv. vesicatoria (strain 85-10) (Xanthomonas campestris pv. vesicatoria) protein is Tetraacyldisaccharide 4'-kinase.